The sequence spans 304 residues: Glucose-6-phosphate isomerase (304 aa).

Glu146 functions as the Proton donor in the catalytic mechanism. The active site involves His177.

The protein belongs to the GPI family.

The protein resides in the cytoplasm. It catalyses the reaction alpha-D-glucose 6-phosphate = beta-D-fructose 6-phosphate. It functions in the pathway carbohydrate degradation; glycolysis; D-glyceraldehyde 3-phosphate and glycerone phosphate from D-glucose: step 2/4. The polypeptide is Glucose-6-phosphate isomerase (PGI) (Calanus finmarchicus (Calanus tonsus)).